Consider the following 429-residue polypeptide: Serine--tRNA ligase (429 aa).

229 to 231 (TAE) contacts L-serine. 260 to 262 (RSE) provides a ligand contact to ATP. Residue E283 coordinates L-serine. ATP is bound at residue 347–350 (EISS). S383 provides a ligand contact to L-serine.

The protein belongs to the class-II aminoacyl-tRNA synthetase family. Type-1 seryl-tRNA synthetase subfamily. As to quaternary structure, homodimer. The tRNA molecule binds across the dimer.

Its subcellular location is the cytoplasm. The enzyme catalyses tRNA(Ser) + L-serine + ATP = L-seryl-tRNA(Ser) + AMP + diphosphate + H(+). The catalysed reaction is tRNA(Sec) + L-serine + ATP = L-seryl-tRNA(Sec) + AMP + diphosphate + H(+). The protein operates within aminoacyl-tRNA biosynthesis; selenocysteinyl-tRNA(Sec) biosynthesis; L-seryl-tRNA(Sec) from L-serine and tRNA(Sec): step 1/1. Functionally, catalyzes the attachment of serine to tRNA(Ser). Is also able to aminoacylate tRNA(Sec) with serine, to form the misacylated tRNA L-seryl-tRNA(Sec), which will be further converted into selenocysteinyl-tRNA(Sec). The polypeptide is Serine--tRNA ligase (Orientia tsutsugamushi (strain Boryong) (Rickettsia tsutsugamushi)).